We begin with the raw amino-acid sequence, 336 residues long: MTALPSKNCSFQYQSHQAPRSLDATCLLLLIILGKVLLNVLILRVKRKDTSWSFMEYFCFSLALVDLLLLVNISVLTYFRDFVVLGIRFTNYHICLLTQIVSFAYGFLHYPVCSLACIDYWCNLSRATKPSSRWQKLLYLLTVILTWISVLAYVLGDPAISASLKTHKTSVNQCPSYVSTQSHWLSLSMLMILSVAFLISWQEVVALIQAIRIASYKNKAVLYFPFPPHTSYTVSPRAVLLPRLIVCFLGTWFPFVALQVLILSLRVQIPAYIEMNVPWLYFVNSFLIAAVYWFNCHKLYWRDGMFPVDPFINWKCCFVPVHRLKQVERPMSIIIC.

Residues M1–S21 lie on the Extracellular side of the membrane. N-linked (GlcNAc...) asparagine glycosylation occurs at N8. The chain crosses the membrane as a helical span at residues L22–I42. The Cytoplasmic segment spans residues L43 to E56. The chain crosses the membrane as a helical span at residues Y57–T77. Residues Y78 to C95 are Extracellular-facing. The helical transmembrane segment at L96–A116 threads the bilayer. The Cytoplasmic segment spans residues C117–K136. A helical membrane pass occupies residues L137–D157. The Extracellular portion of the chain corresponds to P158 to L187. The helical transmembrane segment at S188 to I208 threads the bilayer. Over Q209–R243 the chain is Cytoplasmic. A helical membrane pass occupies residues L244–S264. Over L265 to Y272 the chain is Extracellular. Residues I273–W293 form a helical membrane-spanning segment. Over F294–C336 the chain is Cytoplasmic.

This sequence belongs to the G-protein coupled receptor 1 family.

It is found in the cell membrane. Functionally, orphan receptor. This is Probable G-protein coupled receptor 160 (Gpr160) from Rattus norvegicus (Rat).